Here is a 304-residue protein sequence, read N- to C-terminus: MKELLKELVEKNRKFTADGNVANYIPELDKADKNALGIYVTTLDGQEFFAGDYNTKFTIQSISKIISLMLAILDNGEEYVFSKVGMEPSGDPFNSIRKLETSSRKKPYNPMINAGAIAVASMIKGKDDREKFSRLLNFAKLITEDDSLDLNYKIYIGESDTGFRNYSMAYFLKGEGIIEGNVNEALTVYFKQCSIEGTAKTISTLGKFLANDGVLSNGERILTTRMAKIIKTLMVTCGMYDSSGEFAVRVGIPSKSGVGGGICSVVPGKMGIGVYGPSLDKKGNSLAGGHLLEDLSAELSLNIF.

Substrate-binding residues include Ser61, Asn113, Glu158, Asn165, Tyr189, Tyr240, and Val258.

This sequence belongs to the glutaminase family. Homotetramer.

It catalyses the reaction L-glutamine + H2O = L-glutamate + NH4(+). This Fusobacterium nucleatum subsp. nucleatum (strain ATCC 25586 / DSM 15643 / BCRC 10681 / CIP 101130 / JCM 8532 / KCTC 2640 / LMG 13131 / VPI 4355) protein is Glutaminase.